The primary structure comprises 202 residues: Imidazole glycerol phosphate synthase subunit HisH (202 aa).

Residues 3 to 202 (RIVILDYGLG…KILKNFVDMC (200 aa)) enclose the Glutamine amidotransferase type-1 domain. Cys79 functions as the Nucleophile in the catalytic mechanism. Catalysis depends on residues His183 and Glu185.

As to quaternary structure, heterodimer of HisH and HisF.

The protein localises to the cytoplasm. The enzyme catalyses 5-[(5-phospho-1-deoxy-D-ribulos-1-ylimino)methylamino]-1-(5-phospho-beta-D-ribosyl)imidazole-4-carboxamide + L-glutamine = D-erythro-1-(imidazol-4-yl)glycerol 3-phosphate + 5-amino-1-(5-phospho-beta-D-ribosyl)imidazole-4-carboxamide + L-glutamate + H(+). It carries out the reaction L-glutamine + H2O = L-glutamate + NH4(+). The protein operates within amino-acid biosynthesis; L-histidine biosynthesis; L-histidine from 5-phospho-alpha-D-ribose 1-diphosphate: step 5/9. In terms of biological role, IGPS catalyzes the conversion of PRFAR and glutamine to IGP, AICAR and glutamate. The HisH subunit catalyzes the hydrolysis of glutamine to glutamate and ammonia as part of the synthesis of IGP and AICAR. The resulting ammonia molecule is channeled to the active site of HisF. This Methanosarcina barkeri (strain Fusaro / DSM 804) protein is Imidazole glycerol phosphate synthase subunit HisH.